Consider the following 76-residue polypeptide: Sec-independent protein translocase protein TatA (76 aa).

The chain crosses the membrane as a helical span at residues 1 to 21 (MGSFSIWHWLIVLVIVALVFG). 2 stretches are compositionally biased toward basic and acidic residues: residues 39–50 (FKDGMKGEDDKP) and 64–76 (GTVD…KSNS). Positions 39 to 76 (FKDGMKGEDDKPAAQNAAPSQVADKGTVDVEVKEKSNS) are disordered.

It belongs to the TatA/E family. The Tat system comprises two distinct complexes: a TatABC complex, containing multiple copies of TatA, TatB and TatC subunits, and a separate TatA complex, containing only TatA subunits. Substrates initially bind to the TatABC complex, which probably triggers association of the separate TatA complex to form the active translocon.

The protein resides in the cell inner membrane. Part of the twin-arginine translocation (Tat) system that transports large folded proteins containing a characteristic twin-arginine motif in their signal peptide across membranes. TatA could form the protein-conducting channel of the Tat system. This Herminiimonas arsenicoxydans protein is Sec-independent protein translocase protein TatA.